A 675-amino-acid chain; its full sequence is Polyphosphate kinase (675 aa).

N42 is an ATP binding site. Mg(2+)-binding residues include R372 and R401. Catalysis depends on H431, which acts as the Phosphohistidine intermediate. 3 residues coordinate ATP: Y464, R558, and H586.

Belongs to the polyphosphate kinase 1 (PPK1) family. Mg(2+) is required as a cofactor. An intermediate of this reaction is the autophosphorylated ppk in which a phosphate is covalently linked to a histidine residue through a N-P bond.

The catalysed reaction is [phosphate](n) + ATP = [phosphate](n+1) + ADP. Its function is as follows. Catalyzes the reversible transfer of the terminal phosphate of ATP to form a long-chain polyphosphate (polyP). This is Polyphosphate kinase from Helicobacter pylori (strain ATCC 700392 / 26695) (Campylobacter pylori).